A 190-amino-acid chain; its full sequence is Corticoliberin (190 aa).

The signal sequence occupies residues 1–24 (MRLRLLVSVGVLLVALLPSPPCRA). Positions 25–147 (LLSRGPIPGA…QEAPAARKRR (123 aa)) are excised as a propeptide. 2 disordered regions span residues 33-57 (GARQ…QEPQ) and 116-151 (RRPF…SQEP). At A188 the chain carries Alanine amide.

This sequence belongs to the sauvagine/corticotropin-releasing factor/urotensin I family. In terms of assembly, interacts (via C-terminus) with CRFR1 (via N-terminal extracellular domain). In terms of tissue distribution, produced by the hypothalamus.

The protein localises to the secreted. Hormone regulating the release of corticotropin from pituitary gland. Induces NLRP6 in intestinal epithelial cells, hence may influence gut microbiota profile. The sequence is that of Corticoliberin (CRH) from Bos taurus (Bovine).